The chain runs to 518 residues: Uronate isomerase (518 aa).

This sequence belongs to the metallo-dependent hydrolases superfamily. Uronate isomerase family.

It carries out the reaction D-glucuronate = D-fructuronate. The enzyme catalyses aldehydo-D-galacturonate = keto-D-tagaturonate. It functions in the pathway carbohydrate metabolism; pentose and glucuronate interconversion. This Corynebacterium glutamicum (strain ATCC 13032 / DSM 20300 / JCM 1318 / BCRC 11384 / CCUG 27702 / LMG 3730 / NBRC 12168 / NCIMB 10025 / NRRL B-2784 / 534) protein is Uronate isomerase (uxaC).